We begin with the raw amino-acid sequence, 622 residues long: Cilia- and flagella-associated protein 206 (622 aa).

This sequence belongs to the CFAP206 family.

Its subcellular location is the cytoplasm. It localises to the cytoskeleton. The protein localises to the cilium axoneme. The protein resides in the cilium basal body. Functionally, essential for sperm motility and is involved in the regulation of the beating frequency of motile cilia on the epithelial cells of the respiratory tract. Required for the establishment of radial spokes in sperm flagella. This chain is Cilia- and flagella-associated protein 206, found in Bos taurus (Bovine).